The chain runs to 250 residues: Developmental protein SEPALLATA 2 (250 aa).

In terms of domain architecture, MADS-box spans arginine 3–phenylalanine 57. A coiled-coil region spans residues alanine 85–glutamine 150. In terms of domain architecture, K-box spans leucine 88–valine 178.

As to quaternary structure, heterodimer with AGAMOUS capable of binding to CArG-box sequences. Interacts with TT16/AGL32.

The protein resides in the nucleus. In terms of biological role, probable transcription factor. Functions with SEPALLATA1/AGL2 and SEPALLATA3/AGL9 to ensure proper development of petals, stamens and carpels and to prevent the indeterminate growth of the flower meristem. Forms a heterodimer via the K-box domain with AG, that could be involved in genes regulation during floral meristem development. The protein is Developmental protein SEPALLATA 2 (SEP2) of Arabidopsis thaliana (Mouse-ear cress).